A 293-amino-acid polypeptide reads, in one-letter code: Putative phosphoenolpyruvate synthase regulatory protein (293 aa).

173–180 (GVSRCGKT) lines the ADP pocket.

The protein belongs to the pyruvate, phosphate/water dikinase regulatory protein family. PSRP subfamily.

The catalysed reaction is [pyruvate, water dikinase] + ADP = [pyruvate, water dikinase]-phosphate + AMP + H(+). It catalyses the reaction [pyruvate, water dikinase]-phosphate + phosphate + H(+) = [pyruvate, water dikinase] + diphosphate. Functionally, bifunctional serine/threonine kinase and phosphorylase involved in the regulation of the phosphoenolpyruvate synthase (PEPS) by catalyzing its phosphorylation/dephosphorylation. The chain is Putative phosphoenolpyruvate synthase regulatory protein from Photorhabdus laumondii subsp. laumondii (strain DSM 15139 / CIP 105565 / TT01) (Photorhabdus luminescens subsp. laumondii).